An 89-amino-acid chain; its full sequence is MAGIGSRRIVIEVPEGLRVPPGELEKRLRIELALRLYEKGIASLGQARKIAGLSKWDFLELLAREGIPLHYSEEELKEDLEVAKKLAEK.

It belongs to the UPF0175 family.

The protein is UPF0175 protein APE_0276a of Aeropyrum pernix (strain ATCC 700893 / DSM 11879 / JCM 9820 / NBRC 100138 / K1).